The chain runs to 833 residues: MSFYNHKEIEPKWQKYWADHHTFKTGTDASKPKFYALDMFPYPSGAGLHVGHPEGYTATDILSRFKRAQGYNVLHPMGWDAFGLPAEQYAMDTGNDPADFTAENIANFKRQINALGFSYDWDREINTTDPNYYKWTQWIFTKLYEKGLAYEAEVPVNWVEELGTAIANEEVLPDGTSERGGYPVVRKPMRQWMLKITAYAERLLNDLDELDWPESIKDMQRNWIGKSTGANVTFKVKGTDKEFTVFTTRPDTLFGATFTVLAPEHDLVDAITSPEQAEAVANYKHQASLKSDLARTDLAKEKTGVWTGAYAINPVNGREIPIWIADYVLASYGTGAVMAVPAHDERDWEFAKQFGLPIVEVLEGGNVEEAAYTEDGPHVNSDFLNGLNKEEAIAKIVAWLEEKGFGQEKITYRLRDWLFSRQRYWGEPIPIIHWEDGTSTAVPESELPLVLPVTKDIRPSGTGESPLANLTDWLEVTREDGVKGRRETNTMPQWAGSSWYYLRYIDPHNTEKLADEDLLKQWLPVDIYVGGAEHAVLHLLYARFWHKFLYDLGVVPTKEPFQKLFNQGMILGTSYRDHRGALVATDKVEKRDGSFFHVETGEELEQAPAKMSKSLKNVVNPDDVVEQYGADTLRVYEMFMGPLDASIAWSEEGLEGSRKFLDRVYRLITSKEIVAENNGGLDKVYNETVKSVTEQIELMKFNTAIAQLMVFVNAANKEDKLYVDYAKGFVQLIAPFAPHLAEELWQTLTATGESISYVAWPTWDESKLVEDEIEIVVQIKGKVRAKLMVAKDLSREELQEVALADEKVKAEIDGKEIVKVIAVPNKLVNIVVK.

The short motif at 41-52 (PYPSGAGLHVGH) is the 'HIGH' region element. Positions 610–614 (KMSKS) match the 'KMSKS' region motif. K613 contributes to the ATP binding site.

It belongs to the class-I aminoacyl-tRNA synthetase family.

The protein localises to the cytoplasm. It carries out the reaction tRNA(Leu) + L-leucine + ATP = L-leucyl-tRNA(Leu) + AMP + diphosphate. The chain is Leucine--tRNA ligase from Streptococcus thermophilus (strain CNRZ 1066).